Here is a 572-residue protein sequence, read N- to C-terminus: Putative two-component response regulator ARR13 (572 aa).

The 118-residue stretch at 17-134 (NVMVVDDNRV…DLPKIYQFAL (118 aa)) folds into the Response regulatory domain. The residue at position 71 (Asp-71) is a 4-aspartylphosphate. The disordered stretch occupies residues 175–225 (KKNCSSKSDTRTVNSTNVSHVSTNGSRKNRKRKPKGGPSDDGESLSQPPKK). A compositionally biased stretch (polar residues) spans 179–197 (SSKSDTRTVNSTNVSHVST). A Nuclear localization signal motif is present at residues 224 to 227 (KKKK). Positions 227-277 (KIWWTNPLQDLFLQAIQHIGYDKVVPKKILAIMNVPYLTRENVASHLQKYR) form a DNA-binding region, myb-like GARP. Positions 509–522 (NQDQSNGESSNTIA) are enriched in polar residues. The disordered stretch occupies residues 509–531 (NQDQSNGESSNTIATPETNTPNF).

Belongs to the ARR family. Type-B subfamily. In terms of assembly, binds the target DNA as a monomer. Two-component system major event consists of a His-to-Asp phosphorelay between a sensor histidine kinase (HK) and a response regulator (RR). In plants, the His-to-Asp phosphorelay involves an additional intermediate named Histidine-containing phosphotransfer protein (HPt). This multistep phosphorelay consists of a His-Asp-His-Asp sequential transfer of a phosphate group between first a His and an Asp of the HK protein, followed by the transfer to a conserved His of the HPt protein and finally the transfer to an Asp in the receiver domain of the RR protein.

It localises to the nucleus. In terms of biological role, putative transcriptional activator that binds specifically to the DNA sequence 5'-[AG]GATT-3'. Functions as a response regulator involved in His-to-Asp phosphorelay signal transduction system. Phosphorylation of the Asp residue in the receiver domain activates the ability of the protein to promote the transcription of target genes. Could directly activate some type-A response regulators in response to cytokinins. In Arabidopsis thaliana (Mouse-ear cress), this protein is Putative two-component response regulator ARR13 (ARR13).